Reading from the N-terminus, the 265-residue chain is Reduced viability upon starvation protein 161 (265 aa).

Residues 15-239 (HSVIIKNVDK…LDQQSRDDYA (225 aa)) form the BAR domain. The stretch at 126–193 (YFKEIEEAIK…NQLKTELPQL (68 aa)) forms a coiled coil.

The protein resides in the cytoplasm. It is found in the cytoskeleton. Component of a cytoskeletal structure that is required for the formation of endocytic vesicles at the plasma membrane level. In Saccharomyces cerevisiae (strain ATCC 204508 / S288c) (Baker's yeast), this protein is Reduced viability upon starvation protein 161 (RVS161).